The sequence spans 329 residues: Glucosyl-3-phosphoglycerate synthase (329 aa).

Residues 55–59 (PALDE), serine 86, lysine 119, and 139–141 (DSD) contribute to the UDP-alpha-D-glucose site. A Mn(2+)-binding site is contributed by aspartate 141. Position 189–192 (189–192 (GRVT)) interacts with (2R)-3-phosphoglycerate. 234 to 237 (YGVE) provides a ligand contact to UDP-alpha-D-glucose. Histidine 263 is a binding site for Mn(2+). Asparagine 265 contributes to the (2R)-3-phosphoglycerate binding site.

Belongs to the glycosyltransferase 2 family. As to quaternary structure, homodimer. Requires Mg(2+) as cofactor. It depends on Mn(2+) as a cofactor.

The enzyme catalyses an NDP-alpha-D-glucose + (2R)-3-phosphoglycerate = (2R)-2-O-(alpha-D-glucopyranosyl)-3-phospho-glycerate + a ribonucleoside 5'-diphosphate + H(+). It catalyses the reaction (2R)-3-phosphoglycerate + UDP-alpha-D-glucose = (2R)-2-O-(alpha-D-glucopyranosyl)-3-phospho-glycerate + UDP + H(+). It carries out the reaction GDP-D-glucose + (2R)-3-phosphoglycerate = (2R)-2-O-(alpha-D-glucopyranosyl)-3-phospho-glycerate + GDP + H(+). Involved in the biosynthesis of 6-O-methylglucose lipopolysaccarides (MGLPs). Catalyzes the transfer of the glucose moiety from UDP-alpha-D-glucose (UDP-Glc) to the position 2 of 3-phospho-D-glycerate (3-PGA) to form glucosyl-3-phosphoglycerate (GPG). To a lesser extent can also use GDP-Glc but not UDP-Gal or UDP-GlcNAc as the sugar donor. In Mycolicibacterium paratuberculosis (strain ATCC BAA-968 / K-10) (Mycobacterium paratuberculosis), this protein is Glucosyl-3-phosphoglycerate synthase.